The following is an 89-amino-acid chain: Small ribosomal subunit protein uS15 (89 aa).

The protein belongs to the universal ribosomal protein uS15 family. As to quaternary structure, part of the 30S ribosomal subunit. Forms a bridge to the 50S subunit in the 70S ribosome, contacting the 23S rRNA.

One of the primary rRNA binding proteins, it binds directly to 16S rRNA where it helps nucleate assembly of the platform of the 30S subunit by binding and bridging several RNA helices of the 16S rRNA. Its function is as follows. Forms an intersubunit bridge (bridge B4) with the 23S rRNA of the 50S subunit in the ribosome. The protein is Small ribosomal subunit protein uS15 of Geobacillus stearothermophilus (Bacillus stearothermophilus).